The sequence spans 343 residues: L-idonate 5-dehydrogenase (NAD(P)(+)) (343 aa).

Zn(2+) contacts are provided by Cys-40, His-65, Cys-93, Cys-96, Cys-99, Cys-107, and Glu-153.

It belongs to the zinc-containing alcohol dehydrogenase family. Zn(2+) serves as cofactor.

It carries out the reaction L-idonate + NADP(+) = 5-dehydro-D-gluconate + NADPH + H(+). It catalyses the reaction L-idonate + NAD(+) = 5-dehydro-D-gluconate + NADH + H(+). Its pathway is carbohydrate acid metabolism; L-idonate degradation. Functionally, catalyzes the NADH/NADPH-dependent oxidation of L-idonate to 5-ketogluconate (5KG). The protein is L-idonate 5-dehydrogenase (NAD(P)(+)) (idnD) of Escherichia coli (strain K12).